The following is a 240-amino-acid chain: Tetrahydromethanopterin S-methyltransferase subunit A (240 aa).

At 1–218 (MADKKEPAPG…KFHSGVHAGK (218 aa)) the chain is on the cytoplasmic side. Histidine 85 contributes to the 5-hydroxybenzimidazolylcob(I)amide binding site. The helical transmembrane segment at 219-239 (IEGAMIGLTVTISLLGLLLLG) threads the bilayer. Arginine 240 is a topological domain (extracellular).

The protein belongs to the MtrA family. In terms of assembly, the complex is composed of 8 subunits; MtrA, MtrB, MtrC, MtrD, MtrE, MtrF, MtrG and MtrH. The cofactor is 5-hydroxybenzimidazolylcob(I)amide.

The protein localises to the cell membrane. The catalysed reaction is 5-methyl-5,6,7,8-tetrahydromethanopterin + coenzyme M + 2 Na(+)(in) = 5,6,7,8-tetrahydromethanopterin + methyl-coenzyme M + 2 Na(+)(out). The protein operates within one-carbon metabolism; methanogenesis from CO(2); methyl-coenzyme M from 5,10-methylene-5,6,7,8-tetrahydromethanopterin: step 2/2. Part of a complex that catalyzes the formation of methyl-coenzyme M and tetrahydromethanopterin from coenzyme M and methyl-tetrahydromethanopterin. This is an energy-conserving, sodium-ion translocating step. This Methanosarcina barkeri (strain Fusaro / DSM 804) protein is Tetrahydromethanopterin S-methyltransferase subunit A.